Reading from the N-terminus, the 135-residue chain is 6-pyruvoyl tetrahydrobiopterin synthase (135 aa).

H17 is a binding site for Zn(2+). The Proton acceptor role is filled by C36. Zn(2+) is bound by residues H40 and H42. Residues H81 and E124 each act as charge relay system in the active site.

Belongs to the PTPS family. Homohexamer formed of two homotrimers in a head to head fashion. Zn(2+) is required as a cofactor.

The enzyme catalyses 7,8-dihydroneopterin 3'-triphosphate = 6-pyruvoyl-5,6,7,8-tetrahydropterin + triphosphate + H(+). Its pathway is cofactor biosynthesis; tetrahydrobiopterin biosynthesis; tetrahydrobiopterin from 7,8-dihydroneopterin triphosphate: step 1/3. Involved in the biosynthesis of tetrahydrobiopterin, an essential cofactor of aromatic amino acid hydroxylases. Catalyzes the transformation of 7,8-dihydroneopterin triphosphate into 6-pyruvoyl tetrahydropterin. In Dictyostelium discoideum (Social amoeba), this protein is 6-pyruvoyl tetrahydrobiopterin synthase (ptsA).